The primary structure comprises 300 residues: Cis-3-alkyl-4-alkyloxetan-2-one decarboxylase (300 aa).

An AB hydrolase-1 domain is found at 33 to 282; it reads VVVMLHGNPS…DDANHYVLED (250 aa).

It belongs to the AB hydrolase superfamily. In terms of assembly, homotetramer. Forms a complex with OleC and OleD.

The protein localises to the cytoplasm. It catalyses the reaction a cis-3-alkyl-4-alkyloxetan-2-one = a cis-alkene + CO2. Functionally, involved in olefin biosynthesis. Catalyzes the elimination of carbon dioxide from beta-lactones to form the final olefin product. In Xanthomonas campestris pv. campestris (strain ATCC 33913 / DSM 3586 / NCPPB 528 / LMG 568 / P 25), this protein is Cis-3-alkyl-4-alkyloxetan-2-one decarboxylase.